Reading from the N-terminus, the 82-residue chain is MPKRVLQGVVVSDKTDKTVVVRVERRFTHPLLKKTVRRSKKYHAHDEANAWKVGDTVWIEEHRPISKLKNWIVIQGEKRAEV.

Belongs to the universal ribosomal protein uS17 family. Part of the 30S ribosomal subunit.

Functionally, one of the primary rRNA binding proteins, it binds specifically to the 5'-end of 16S ribosomal RNA. The protein is Small ribosomal subunit protein uS17 of Xanthobacter autotrophicus (strain ATCC BAA-1158 / Py2).